A 262-amino-acid polypeptide reads, in one-letter code: tRNA (guanine-N(1)-)-methyltransferase (262 aa).

Residues Gly113 and 137 to 142 (IGDYVL) each bind S-adenosyl-L-methionine.

Belongs to the RNA methyltransferase TrmD family. In terms of assembly, homodimer.

The protein resides in the cytoplasm. It carries out the reaction guanosine(37) in tRNA + S-adenosyl-L-methionine = N(1)-methylguanosine(37) in tRNA + S-adenosyl-L-homocysteine + H(+). In terms of biological role, specifically methylates guanosine-37 in various tRNAs. The protein is tRNA (guanine-N(1)-)-methyltransferase of Thermobifida fusca (strain YX).